We begin with the raw amino-acid sequence, 393 residues long: MALPRSQGHWSNKDILRLLECMENNRPSDDNSTFSSTQSHMDWGKVAFKNFSGEMCRLKWLEISCNLRKFGTLKELVLEAKKCVKKMNKSQKYRNGPDFPKRPLTAYNRFFKESWPQYSQMYPGMRSQELTKILSKKYRELPEQMKQKYIQDFRKEKQEFEEKLARFREEHPDLVQKAKKSSVSKRTQNKVQKKFQKNIEEVRSLPKTDRFFKKVKFHGEPQKPPMNGYHKFHQDSWSSKEMQHLSVRERMVEIGRRWQRIPQSQKDHFKSQAEELQKQYKVKLDLWLKTLSPENYAAYKESTYAKGKNMAMTGGPDPRLKQADPQSSSAKGLQEGFGEGQGLQAAGTDSSQTIWVNCHVSMEPEENRKKDREKEESSNSSDCSSGEEIEVDV.

2 consecutive DNA-binding regions (HMG box) follow at residues 100–168 (PKRP…ARFR) and 222–288 (QKPP…DLWL). The segment at 308 to 393 (KNMAMTGGPD…SSGEEIEVDV (86 aa)) is disordered. Basic and acidic residues predominate over residues 365–377 (EENRKKDREKEES).

The protein resides in the cytoplasm. It localises to the nucleus. Its function is as follows. Essential for proliferation of the inner cell mass and trophectodermal cells in peri-implantation development. The chain is Upstream-binding factor 1-like protein 1 from Homo sapiens (Human).